A 773-amino-acid chain; its full sequence is Leucine-rich repeat-containing protein let-4 (773 aa).

The signal sequence occupies residues 1 to 20; it reads MRLLLCLLLFSTLLINSTNA. Topologically, residues 21–689 are extracellular; the sequence is CPGVITQACF…RLEKSFFTTT (669 aa). LRR repeat units follow at residues 61 to 84, 85 to 107, 109 to 132, 133 to 157, 159 to 181, 183 to 206, 207 to 230, 231 to 254, 256 to 278, 279 to 302, 303 to 326, 328 to 349, 350 to 373, 375 to 397, 399 to 421, and 486 to 516; these read VGLIQSLTMNQAELVELPPNFFSG, LFIRRLDLSQNKIKKIDDAAFAG, NPVLEEVVLNHNLIEKVPAAALAG, LPNLLRLDLSNNSIVEIQEQEIFPN, NKLYDINLGSNKIFSIHTSTFQN, KNSIQTINLGHNNMTAVPSSAIRG, LKQLQSLHLHKNRIEQLDALNFLN, LPVLNLLNLAGNQIHELNRQAFLN, PSLRYLYLSGNKITKLTAYQFQT, FEQLEMLDLTNNEIGAIPANSLSG, LKQLRQLYLAHNKISNISSNAFTN, SIVVLVLSSNELKTLTAGIISG, LPNLQQVSFRDNQIKTINRNAFYD, ASLVMLDLAKNQLTEIAPTTFLA, LNLLLVDLSENKLPKTPYSAFNS, and LVQIPKMQIHRNVHTTTGDQAPQIPSGAFQQ. The chain crosses the membrane as a helical span at residues 690–710; that stretch reads IIFICVGTAVIVLVVVIAGLC. Over 711 to 773 the chain is Cytoplasmic; it reads ISKHRQLQFE…PGSSYCNYYK (63 aa).

As to expression, in L1 larvae, expressed in a subset of epithelial cells including epidermal, vulval and rectal cells and the excretory duct and pore. Absent from internal epithelia such as the gut and pharyngeal tubes. Transiently expressed in the excretory canal cell at the 1.5-fold embryonic stage but no longer visible in this cell at hatching.

It localises to the apical cell membrane. Its function is as follows. Required for apical extracellular matrix organization and epithelial junction maintenance. This Caenorhabditis elegans protein is Leucine-rich repeat-containing protein let-4 (let-4).